The sequence spans 43 residues: Protein PsbN (43 aa).

A helical membrane pass occupies residues 4–24; that stretch reads ATVLSITFAVILIAITGLAVY.

The protein belongs to the PsbN family.

It is found in the cellular thylakoid membrane. In terms of biological role, may play a role in photosystem I and II biogenesis. The sequence is that of Protein PsbN from Synechocystis sp. (strain ATCC 27184 / PCC 6803 / Kazusa).